Consider the following 199-residue polypeptide: MVFAIRIRQFHTTLVSAEKNGLQKLIPPRLKTIWNQMLVETKGAGNGPERFEMIRQKYKALTADEIQKYKNKLQEQFDAEKKRFMETLRSFTPTEIDSENRRRSKEAHSTGSRYYRLRHPDVPKKPSSAFILFYKELRNNPKLRQELGIPEAISTLVEETQNASKAWKELAEDKKKPFIDKSKALKEQYDKFMKEAGFR.

Positions 123–197 form a DNA-binding region, HMG box; that stretch reads PKKPSSAFIL…QYDKFMKEAG (75 aa).

In terms of assembly, monomer.

The protein resides in the nucleus. Its function is as follows. Binds to cytosines in base mismatches and opposite chemically altered guanines. May be involved in repair of DNA damage. This chain is Cytosine-containing mismatch-binding protein 1, found in Schizosaccharomyces pombe (strain 972 / ATCC 24843) (Fission yeast).